The sequence spans 287 residues: Small ribosomal subunit biogenesis GTPase RsgA (287 aa).

Residues 61-218 form the CP-type G domain; that stretch reads SSELIRPTVA…LVDTPGFTTL (158 aa). GTP-binding positions include 110–113 and 161–169; these read NKED and GPSGAGKST. Zn(2+)-binding residues include Cys-242, Cys-247, His-249, and Cys-255.

The protein belongs to the TRAFAC class YlqF/YawG GTPase family. RsgA subfamily. Monomer. Associates with 30S ribosomal subunit, binds 16S rRNA. Zn(2+) serves as cofactor.

The protein localises to the cytoplasm. In terms of biological role, one of several proteins that assist in the late maturation steps of the functional core of the 30S ribosomal subunit. Helps release RbfA from mature subunits. May play a role in the assembly of ribosomal proteins into the subunit. Circularly permuted GTPase that catalyzes slow GTP hydrolysis, GTPase activity is stimulated by the 30S ribosomal subunit. The polypeptide is Small ribosomal subunit biogenesis GTPase RsgA (Clostridium perfringens (strain 13 / Type A)).